A 544-amino-acid polypeptide reads, in one-letter code: Glucans biosynthesis protein G 1 (544 aa).

A signal peptide spans 1–33 (MVSLLRCQSFKPSSIICSLALSAAFALSGTAFA). The segment at 36-58 (SKPAENKPATPVVSPPKATAPSA) is disordered.

It belongs to the OpgD/OpgG family.

It localises to the periplasm. It functions in the pathway glycan metabolism; osmoregulated periplasmic glucan (OPG) biosynthesis. Involved in the biosynthesis of osmoregulated periplasmic glucans (OPGs). In Shewanella oneidensis (strain ATCC 700550 / JCM 31522 / CIP 106686 / LMG 19005 / NCIMB 14063 / MR-1), this protein is Glucans biosynthesis protein G 1 (opgG1).